The primary structure comprises 55 residues: uncharacterized protein (55 aa).

Residues 24 to 46 (LFIIFFTYSYYYCGFLQSFNYII) traverse the membrane as a helical segment.

The protein resides in the membrane. This is an uncharacterized protein from Dictyostelium discoideum (Social amoeba).